The primary structure comprises 408 residues: Na(+)-translocating NADH-quinone reductase subunit F (408 aa).

Residues 4-24 traverse the membrane as a helical segment; that stretch reads VYLGVGMFTAIVLVLVLVILF. The 2Fe-2S ferredoxin-type domain occupies 33-127; that stretch reads GDIIIGINGD…DMEIELDEEI (95 aa). [2Fe-2S] cluster contacts are provided by Cys70, Cys76, Cys79, and Cys111. An FAD-binding FR-type domain is found at 130 to 270; the sequence is IKKWECDVIS…SGPFGEFFAK (141 aa).

It belongs to the NqrF family. Composed of six subunits; NqrA, NqrB, NqrC, NqrD, NqrE and NqrF. The cofactor is [2Fe-2S] cluster. Requires FAD as cofactor.

The protein resides in the cell inner membrane. It catalyses the reaction a ubiquinone + n Na(+)(in) + NADH + H(+) = a ubiquinol + n Na(+)(out) + NAD(+). NQR complex catalyzes the reduction of ubiquinone-1 to ubiquinol by two successive reactions, coupled with the transport of Na(+) ions from the cytoplasm to the periplasm. The first step is catalyzed by NqrF, which accepts electrons from NADH and reduces ubiquinone-1 to ubisemiquinone by a one-electron transfer pathway. This chain is Na(+)-translocating NADH-quinone reductase subunit F, found in Shewanella denitrificans (strain OS217 / ATCC BAA-1090 / DSM 15013).